The following is a 588-amino-acid chain: Putative ABC transporter ATP-binding protein PAM_020 (588 aa).

ABC transporter domains lie at 6–247 (IIFK…GIQE) and 317–551 (LQLQ…TSLN). ATP contacts are provided by residues 40-47 (GKNGSGKS) and 351-358 (GKNGSGKS).

This sequence belongs to the ABC transporter superfamily.

The protein resides in the cell membrane. Its function is as follows. Probably part of an ABC transporter complex. Responsible for energy coupling to the transport system. The sequence is that of Putative ABC transporter ATP-binding protein PAM_020 from Onion yellows phytoplasma (strain OY-M).